Reading from the N-terminus, the 78-residue chain is Translational regulator CsrA (78 aa).

The protein belongs to the CsrA/RsmA family. Homodimer; the beta-strands of each monomer intercalate to form a hydrophobic core, while the alpha-helices form wings that extend away from the core.

The protein localises to the cytoplasm. Its function is as follows. A translational regulator that binds mRNA to regulate translation initiation and/or mRNA stability. Usually binds in the 5'-UTR at or near the Shine-Dalgarno sequence preventing ribosome-binding, thus repressing translation. Its main target seems to be the major flagellin gene, while its function is anatagonized by FliW. This chain is Translational regulator CsrA, found in Desulfovibrio desulfuricans (strain ATCC 27774 / DSM 6949 / MB).